The following is a 539-amino-acid chain: Tripartite motif-containing protein 26 (539 aa).

The RING-type zinc-finger motif lies at 16–57; that stretch reads CSICLDYLRDPVTIDCGHVFCRSCTTDVRPISGSRPVCPLCK. The segment at 97–138 adopts a B box-type zinc-finger fold; that stretch reads QDAKLCERHREKLHYYCEDDGKLLCVMCRESREHRPHTAVLM. Zn(2+) contacts are provided by Cys102, His105, Cys124, and His130. Positions 188–227 form a coiled coil; it reads IVAEFEQGHQFLREREEHLLEQLAKLEQELTEGREKFKSR. In terms of domain architecture, B30.2/SPRY spans 295 to 539; the sequence is RGLREFQGKL…WPGTRLLLRP (245 aa). The segment at 376–437 is disordered; the sequence is REGWSEDEEE…EEEEEVLESC (62 aa). Residues 380 to 434 are compositionally biased toward acidic residues; that stretch reads SEDEEEGDEEEEGEEEEEEEEAGYGDGYDDWETDEDEESLGDEEEEEEEEEEEVL.

It belongs to the TRIM/RBCC family. Interacts with TBK1; this interaction bridges together TBK1 and NEMO in order to activate TBK1. Interacts with INCA1. Post-translationally, autoubiquitinates upon viral infection. In turn, autoubiquitinated TRIM26 recruits NEMO and bridges TBK1-NEMO interaction.

The protein resides in the cytoplasm. The protein localises to the nucleus. It carries out the reaction S-ubiquitinyl-[E2 ubiquitin-conjugating enzyme]-L-cysteine + [acceptor protein]-L-lysine = [E2 ubiquitin-conjugating enzyme]-L-cysteine + N(6)-ubiquitinyl-[acceptor protein]-L-lysine.. In terms of biological role, E3 ubiquitin-protein ligase which regulates the IFN-beta production and antiviral response downstream of various DNA-encoded pattern-recognition receptors (PRRs). Also plays a central role in determining the response to different forms of oxidative stress by controlling levels of DNA glycosylases NEIL1, NEIL3 and NTH1 that are involved in repair of damaged DNA. Promotes nuclear IRF3 ubiquitination and proteasomal degradation. Bridges together TBK1 and NEMO during the innate response to viral infection leading to the activation of TBK1. Positively regulates LPS-mediated inflammatory innate immune response by catalyzing the 'Lys-11'-linked polyubiquitination of TAB1 to enhance its activation and subsequent NF-kappa-B and MAPK signaling. In a manner independent of its catalytic activity, inhibits WWP2, a SOX2-directed E3 ubiquitin ligase, and thus protects SOX2 from polyubiquitination and proteasomal degradation. Ubiquitinates the histone acetyltransferase protein complex component PHF20 and thereby triggers its degradation in the nucleus after its recruitment by the histone demethylase KDM6B, serving as a scaffold protein. Upon induction by TGF-beta, ubiquitinates the TFIID component TAF7 for proteasomal degradation. Induces ferroptosis by ubiquitinating SLC7A11, a critical protein for lipid reactive oxygen species (ROS) scavenging. Inhibits directly hepatitis B virus replication by mediating HBX ubiquitination and subsequent degradation. Its function is as follows. (Microbial infection) Promotes herpes simplex virus type 2/HHV-2 infection in vaginal epithelial cells by decreasing the nuclear localization of IRF3, the primary mediator of type I interferon activation. This Homo sapiens (Human) protein is Tripartite motif-containing protein 26 (TRIM26).